A 314-amino-acid polypeptide reads, in one-letter code: tRNA N6-adenosine threonylcarbamoyltransferase (314 aa).

Fe cation-binding residues include His-106, His-110, and Tyr-127. Substrate is bound by residues 127–131 (YVSGA), Asp-159, Gly-172, Glu-176, and Asn-255. Asp-283 is a Fe cation binding site.

It belongs to the KAE1 / TsaD family. The cofactor is Fe(2+).

The protein localises to the cytoplasm. The enzyme catalyses L-threonylcarbamoyladenylate + adenosine(37) in tRNA = N(6)-L-threonylcarbamoyladenosine(37) in tRNA + AMP + H(+). Its function is as follows. Required for the formation of a threonylcarbamoyl group on adenosine at position 37 (t(6)A37) in tRNAs that read codons beginning with adenine. Is probably involved in the transfer of the threonylcarbamoyl moiety of threonylcarbamoyl-AMP (TC-AMP) to the N6 group of A37. The chain is tRNA N6-adenosine threonylcarbamoyltransferase from Nanoarchaeum equitans (strain Kin4-M).